Consider the following 250-residue polypeptide: Triosephosphate isomerase, glycosomal (250 aa).

2 residues coordinate substrate: Asn11 and Lys13. The active-site Electrophile is His95. Catalysis depends on Glu167, which acts as the Proton acceptor.

This sequence belongs to the triosephosphate isomerase family. Homodimer.

It localises to the glycosome. The catalysed reaction is D-glyceraldehyde 3-phosphate = dihydroxyacetone phosphate. It functions in the pathway carbohydrate biosynthesis; gluconeogenesis. The protein operates within carbohydrate degradation; glycolysis; D-glyceraldehyde 3-phosphate from glycerone phosphate: step 1/1. This chain is Triosephosphate isomerase, glycosomal, found in Trypanosoma brucei brucei.